A 676-amino-acid chain; its full sequence is Cysteine-rich receptor-like protein kinase 4 (676 aa).

The N-terminal stretch at 1–16 (MSFFWLFPFLLHLSFA) is a signal peptide. The Extracellular segment spans residues 17–287 (DSLSPLSAPV…ISERGKGRNS (271 aa)). 2 Gnk2-homologous domains span residues 31 to 135 (HLNH…HRNI) and 146 to 246 (ILLN…NYSF). N-linked (GlcNAc...) asparagine glycosylation is found at Asn-33, Asn-46, Asn-64, Asn-152, Asn-181, Asn-243, and Asn-248. The disordered stretch occupies residues 252–279 (TRSSSPPSLPPRSTPQQQLKLAPPPLIS). Asn-286 is a glycosylation site (N-linked (GlcNAc...) asparagine). The chain crosses the membrane as a helical span at residues 288–308 (SVIIVVVVPIIALLLLFVAFF). The Cytoplasmic portion of the chain corresponds to 309 to 676 (SLRAKKTRTN…DASITNVTPR (368 aa)). A Protein kinase domain is found at 351–631 (FCETNKLGQG…QMLTTSSIAL (281 aa)). Residues 357-365 (LGQGGFGEV) and Lys-379 each bind ATP. Position 424 is a phosphotyrosine (Tyr-424). Asp-476 (proton acceptor) is an active-site residue. Thr-516 carries the phosphothreonine modification. Tyr-524 is modified (phosphotyrosine).

Belongs to the protein kinase superfamily. Ser/Thr protein kinase family. CRK subfamily.

The protein localises to the membrane. It catalyses the reaction L-seryl-[protein] + ATP = O-phospho-L-seryl-[protein] + ADP + H(+). The catalysed reaction is L-threonyl-[protein] + ATP = O-phospho-L-threonyl-[protein] + ADP + H(+). The sequence is that of Cysteine-rich receptor-like protein kinase 4 (CRK4) from Arabidopsis thaliana (Mouse-ear cress).